The chain runs to 246 residues: Type III pantothenate kinase (246 aa).

An ATP-binding site is contributed by 6 to 13 (DVGNSRIK). Substrate contacts are provided by residues Tyr-93 and 100 to 103 (GSDR). The active-site Proton acceptor is Asp-102. Position 125 (Thr-125) interacts with ATP. Thr-175 contributes to the substrate binding site.

Belongs to the type III pantothenate kinase family. As to quaternary structure, homodimer. Requires NH4(+) as cofactor. It depends on K(+) as a cofactor.

The protein localises to the cytoplasm. The catalysed reaction is (R)-pantothenate + ATP = (R)-4'-phosphopantothenate + ADP + H(+). It functions in the pathway cofactor biosynthesis; coenzyme A biosynthesis; CoA from (R)-pantothenate: step 1/5. In terms of biological role, catalyzes the phosphorylation of pantothenate (Pan), the first step in CoA biosynthesis. In Dichelobacter nodosus (strain VCS1703A), this protein is Type III pantothenate kinase.